The primary structure comprises 160 residues: Large ribosomal subunit protein uL16 (160 aa).

The interval 138-160 (KNLENSSQENTKDSKKSQEEVKQ) is disordered. Over residues 147 to 160 (NTKDSKKSQEEVKQ) the composition is skewed to basic and acidic residues.

Belongs to the universal ribosomal protein uL16 family. As to quaternary structure, part of the 50S ribosomal subunit.

In terms of biological role, binds 23S rRNA and is also seen to make contacts with the A and possibly P site tRNAs. This chain is Large ribosomal subunit protein uL16, found in Prochlorococcus marinus (strain AS9601).